Here is a 501-residue protein sequence, read N- to C-terminus: Phenylalanine--tRNA ligase alpha subunit (501 aa).

L-phenylalanine is bound by residues threonine 340 and phenylalanine 423. Glutamate 425 contributes to the Mg(2+) binding site. Phenylalanine 448 provides a ligand contact to L-phenylalanine.

Belongs to the class-II aminoacyl-tRNA synthetase family. Phe-tRNA synthetase alpha subunit type 2 subfamily. Tetramer of two alpha and two beta subunits. Mg(2+) serves as cofactor.

The protein resides in the cytoplasm. It catalyses the reaction tRNA(Phe) + L-phenylalanine + ATP = L-phenylalanyl-tRNA(Phe) + AMP + diphosphate + H(+). The polypeptide is Phenylalanine--tRNA ligase alpha subunit (Methanococcus maripaludis (strain C7 / ATCC BAA-1331)).